The sequence spans 172 residues: Resuscitation-promoting factor RpfE (172 aa).

Residues 1–28 (MKNARTTLIAAAIAGTLVTTSPAGIANA) form the signal peptide. Positions 33 to 89 (LDPNAAAGPDAVGFDPNLPPAPDAAPVDTPPAPEDAGFDPNLPPPLAPDFLSPPAEE) are disordered. A compositionally biased stretch (pro residues) spans 49–65 (NLPPAPDAAPVDTPPAP).

The protein belongs to the transglycosylase family. Rpf subfamily. As to quaternary structure, interacts with RipA.

Its function is as follows. Factor that stimulates resuscitation of dormant cells. Has peptidoglycan (PG) hydrolytic activity. Active in the pM concentration range. Has little to no effect on actively-growing cells. PG fragments could either directly activate the resuscitation pathway of dormant bacteria or serve as a substrate for endogenous Rpf, resulting in low molecular weight products with resuscitation activity. In terms of biological role, stimulates growth of stationary phase M.bovis (a slow-growing Mycobacterium), reduces the lag phase of diluted fast-growers M.smegmatis and Micrococcus luteus. Sequential gene disruption indicates RpfB and RpfE are higher than RpfD and RpfC in functional hierarchy. In Mycobacterium tuberculosis (strain ATCC 25618 / H37Rv), this protein is Resuscitation-promoting factor RpfE (rpfE).